We begin with the raw amino-acid sequence, 124 residues long: UPF0102 protein Blon_1698/BLIJ_1758 (124 aa).

Belongs to the UPF0102 family.

The chain is UPF0102 protein Blon_1698/BLIJ_1758 from Bifidobacterium longum subsp. infantis (strain ATCC 15697 / DSM 20088 / JCM 1222 / NCTC 11817 / S12).